A 1070-amino-acid chain; its full sequence is DNA-directed RNA polymerase subunit beta (1070 aa).

The protein belongs to the RNA polymerase beta chain family. In plastids the minimal PEP RNA polymerase catalytic core is composed of four subunits: alpha, beta, beta', and beta''. When a (nuclear-encoded) sigma factor is associated with the core the holoenzyme is formed, which can initiate transcription.

It is found in the plastid. Its subcellular location is the chloroplast. It carries out the reaction RNA(n) + a ribonucleoside 5'-triphosphate = RNA(n+1) + diphosphate. DNA-dependent RNA polymerase catalyzes the transcription of DNA into RNA using the four ribonucleoside triphosphates as substrates. This is DNA-directed RNA polymerase subunit beta from Illicium oligandrum (Star anise).